Consider the following 231-residue polypeptide: 2,3,4,5-tetrahydropyridine-2,6-dicarboxylate N-acetyltransferase (231 aa).

Belongs to the transferase hexapeptide repeat family. DapH subfamily.

The catalysed reaction is (S)-2,3,4,5-tetrahydrodipicolinate + acetyl-CoA + H2O = L-2-acetamido-6-oxoheptanedioate + CoA. Its pathway is amino-acid biosynthesis; L-lysine biosynthesis via DAP pathway; LL-2,6-diaminopimelate from (S)-tetrahydrodipicolinate (acetylase route): step 1/3. Its function is as follows. Catalyzes the transfer of an acetyl group from acetyl-CoA to tetrahydrodipicolinate. This chain is 2,3,4,5-tetrahydropyridine-2,6-dicarboxylate N-acetyltransferase, found in Thermosipho melanesiensis (strain DSM 12029 / CIP 104789 / BI429).